We begin with the raw amino-acid sequence, 362 residues long: MRNMATMLHLLTLILLTSPASTQTANAVPKRRLIGEDRESGRRWGVAATDLGIPYDMHNGQVGYLFGDTVSTMWVQEAKDLRSPVMLLSGIHPGEDGGIFFESAAGVDGDGLAPRLFYNGDHGDDGTGTWEFTVLPNDGISFPETGEHIISYTSIMNFTTSWTPNYAGLAYSTDGNSFSRLPTKWLNNDNNTDPFQMWTMQRDGDWVYVFTVRCARQYGPMMLQRVPWDKMTDKTEYQGWGWNGEDWGWQRPCSPILDGYFGEPSVRRLQDGTWAMVYLNASTSTPHIVSRTARGPTGPWSEETVQVNQAGDESLLYGGFIHPWSTGERNQLYLMVSNWTSTSDAAPTPEGLVSVSQFTGTL.

The signal sequence occupies residues 1–22; that stretch reads MRNMATMLHLLTLILLTSPAST. Residues asparagine 157, asparagine 190, asparagine 280, and asparagine 338 are each glycosylated (N-linked (GlcNAc...) asparagine).

In terms of biological role, part of the gene cluster that mediates the biosynthesis of notoamide, a fungal indole alkaloid that belongs to a family of natural products containing a characteristic bicyclo[2.2.2]diazaoctane core. The first step of notoamide biosynthesis involves coupling of L-proline and L-tryptophan by the bimodular NRPS notE', to produce cyclo-L-tryptophan-L-proline called brevianamide F. The reverse prenyltransferase notF' then acts as a deoxybrevianamide E synthase and converts brevianamide F to deoxybrevianamide E via reverse prenylation at C-2 of the indole ring leading to the bicyclo[2.2.2]diazaoctane core. Deoxybrevianamide E is further hydroxylated at C-6 of the indole ring, likely catalyzed by the cytochrome P450 monooxygenase notG', to yield 6-hydroxy-deoxybrevianamide E. 6-hydroxy-deoxybrevianamide E is a specific substrate of the prenyltransferase notC' for normal prenylation at C-7 to produce 6-hydroxy-7-prenyl-deoxybrevianamide, also called notoamide S. As the proposed pivotal branching point in notoamide biosynthesis, notoamide S can be diverted to notoamide E through an oxidative pyran ring closure putatively catalyzed by either notH' cytochrome P450 monooxygenase or the notD' FAD-linked oxidoreductase. This step would be followed by an indole 2,3-epoxidation-initiated pinacol-like rearrangement catalyzed by the notB' FAD-dependent monooxygenase leading to the formation of notoamide C and notoamide D. On the other hand notoamide S is converted to notoamide T by notH' (or notD'), a bifunctional oxidase that also functions as the intramolecular Diels-Alderase responsible for generation of (-)-notoamide T. To generate antipodal (+)-notoaminide T, notH (or notD) in Aspergillus strain MF297-2 is expected to catalyze a Diels-Alder reaction leading to the opposite stereochemistry. The remaining oxidoreductase notD' (or notH') likely catalyzes the oxidative pyran ring formation to yield (-)-stephacidin A. The FAD-dependent monooxygenase notI' is highly similar to notB' and is predicted to catalyze a similar conversion from (-)-stephacidin A to (+)-notoamide B via the 2,3-epoxidation of (-)-stephacidin A followed by a pinacol-type rearrangement. Finally, it remains unclear which enzyme could be responsible for the final hydroxylation steps leading to notoamide A and sclerotiamide. The function of notJ' in the notoamide biosynthesis has not been determined yet. The sequence is that of Notoamide biosynthesis cluster protein J' from Aspergillus versicolor.